We begin with the raw amino-acid sequence, 447 residues long: KICSTOR complex protein ITFG2 (447 aa).

The FG-GAP 1; atypical repeat unit spans residues 19–48 (FPHAICLGDVDNDTLNELVVGDTSGKVSVY). At Ser-104 the chain carries Phosphoserine. Residues 126-155 (NTKVMLISDIDGDGCRELVVGYTDRVVRAF) form an FG-GAP 2; atypical repeat. Phosphoserine is present on Ser-220.

As to quaternary structure, part of the KICSTOR complex composed of KPTN, ITFG2, KICS2 and SZT2. SZT2 probably serves as a link between the other three proteins in the KICSTOR complex and may mediate the direct interaction with the GATOR complex via GATOR1. The KICSTOR complex interacts directly with the GATOR1 complex and most probably indirectly with the GATOR2 complex in an amino acid-independent manner.

It localises to the lysosome membrane. As part of the KICSTOR complex functions in the amino acid-sensing branch of the TORC1 signaling pathway. Recruits, in an amino acid-independent manner, the GATOR1 complex to the lysosomal membranes and allows its interaction with GATOR2 and the RAG GTPases. Functions upstream of the RAG GTPases and is required to negatively regulate mTORC1 signaling in absence of amino acids. In absence of the KICSTOR complex mTORC1 is constitutively localized to the lysosome and activated. The KICSTOR complex is also probably involved in the regulation of mTORC1 by glucose. This is KICSTOR complex protein ITFG2 from Homo sapiens (Human).